The sequence spans 318 residues: Dehydrogenase/reductase SDR family member 7C-B (318 aa).

The signal sequence occupies residues 1–32; it reads MGMSDIMWLDVSWAWLVLTAVLLAAAVFYLYT. 49–73 provides a ligand contact to NAD(+); sequence LITDSLSTVGNECAKLFHAGGARLI. Serine 186 contacts substrate. The Proton acceptor role is filled by tyrosine 199.

It belongs to the short-chain dehydrogenases/reductases (SDR) family.

It is found in the secreted. Its function is as follows. Putative oxidoreductase. This is Dehydrogenase/reductase SDR family member 7C-B (dhrs7cb) from Danio rerio (Zebrafish).